Consider the following 75-residue polypeptide: UPF0346 protein LSL_0716 (75 aa).

It belongs to the UPF0346 family.

This chain is UPF0346 protein LSL_0716, found in Ligilactobacillus salivarius (strain UCC118) (Lactobacillus salivarius).